The primary structure comprises 426 residues: Dihydroorotase (426 aa).

His-58 and His-60 together coordinate Zn(2+). Substrate is bound by residues 60 to 62 (HLR) and Asn-92. Zn(2+) contacts are provided by Asp-150, His-177, and His-230. Asn-276 provides a ligand contact to substrate. Asp-303 lines the Zn(2+) pocket. The active site involves Asp-303. Residues His-307 and 321–322 (FG) each bind substrate.

This sequence belongs to the metallo-dependent hydrolases superfamily. DHOase family. Class I DHOase subfamily. It depends on Zn(2+) as a cofactor.

It catalyses the reaction (S)-dihydroorotate + H2O = N-carbamoyl-L-aspartate + H(+). It functions in the pathway pyrimidine metabolism; UMP biosynthesis via de novo pathway; (S)-dihydroorotate from bicarbonate: step 3/3. Catalyzes the reversible cyclization of carbamoyl aspartate to dihydroorotate. The chain is Dihydroorotase from Listeria monocytogenes serotype 4b (strain CLIP80459).